Consider the following 285-residue polypeptide: HTH-type transcriptional regulator MurR (285 aa).

Positions 1–77 (MLYLTKIRNA…MALIGEYSAS (77 aa)) constitute an HTH rpiR-type domain. A DNA-binding region (H-T-H motif) is located at residues 37 to 56 (SRKMAKQLGISQSSIVKFAQ). Residues 128-268 (IIEVISKAPF…FVGLVQLNDV (141 aa)) enclose the SIS domain.

Homotetramer.

The protein operates within amino-sugar metabolism; N-acetylmuramate degradation [regulation]. In terms of biological role, represses the expression of the murPQ operon involved in the uptake and degradation of N-acetylmuramic acid (MurNAc). Binds to two adjacent inverted repeats within the operator region. MurNAc 6-phosphate, the substrate of MurQ, is the specific inducer that weakens binding of MurR to the operator. This chain is HTH-type transcriptional regulator MurR, found in Escherichia coli O7:K1 (strain IAI39 / ExPEC).